Here is a 730-residue protein sequence, read N- to C-terminus: 1,4-alpha-glucan branching enzyme GlgB (730 aa).

Catalysis depends on aspartate 405, which acts as the Nucleophile. Glutamate 458 (proton donor) is an active-site residue.

The protein belongs to the glycosyl hydrolase 13 family. GlgB subfamily. In terms of assembly, monomer.

It catalyses the reaction Transfers a segment of a (1-&gt;4)-alpha-D-glucan chain to a primary hydroxy group in a similar glucan chain.. It participates in glycan biosynthesis; glycogen biosynthesis. Functionally, catalyzes the formation of the alpha-1,6-glucosidic linkages in glycogen by scission of a 1,4-alpha-linked oligosaccharide from growing alpha-1,4-glucan chains and the subsequent attachment of the oligosaccharide to the alpha-1,6 position. The chain is 1,4-alpha-glucan branching enzyme GlgB from Haemophilus influenzae (strain 86-028NP).